Reading from the N-terminus, the 93-residue chain is Phosphoribosyl-ATP pyrophosphatase (93 aa).

This sequence belongs to the PRA-PH family.

Its subcellular location is the cytoplasm. The enzyme catalyses 1-(5-phospho-beta-D-ribosyl)-ATP + H2O = 1-(5-phospho-beta-D-ribosyl)-5'-AMP + diphosphate + H(+). Its pathway is amino-acid biosynthesis; L-histidine biosynthesis; L-histidine from 5-phospho-alpha-D-ribose 1-diphosphate: step 2/9. The chain is Phosphoribosyl-ATP pyrophosphatase from Mycobacterium avium (strain 104).